The following is a 172-amino-acid chain: MNRIVEKWMYRSRWLFAPVYIGLSLGLLALTIKFFQSMYEILPNIFALSEADLVLRLLSLIDLALVGGLLIMVIFSGYENFITNMEIEGAKDKLSWLGNMDAESLKNKVAASIVAISSIHLLGVFMDLKNIPDNKLLWYVVLHLTFVFSAFVMGYLEKISKRSKRANKANQG.

The next 4 membrane-spanning stretches (helical) occupy residues 15–35 (LFAP…IKFF), 57–77 (LLSL…IFSG), 108–128 (KVAA…FMDL), and 136–156 (LLWY…MGYL).

The protein belongs to the UPF0114 family.

The protein resides in the cell membrane. This chain is UPF0114 protein PMI3225, found in Proteus mirabilis (strain HI4320).